Reading from the N-terminus, the 516-residue chain is uncharacterized protein (516 aa).

Residues 31–185 (ACIFLSKFDM…LDKFDIFEKF (155 aa)) enclose the uDENN domain. The region spanning 211–365 (HLVEYLPYWT…LEVYEKLILG (155 aa)) is the cDENN domain. The dDENN domain maps to 367-513 (LQEDASTNAT…DISNLPECLG (147 aa)). Residues Cys-511 and Cys-516 are each lipidated (S-palmitoyl cysteine).

Palmitoylated by AKR1.

Its subcellular location is the lipid droplet. May be involved in lipid metabolism. This is an uncharacterized protein from Saccharomyces cerevisiae (strain ATCC 204508 / S288c) (Baker's yeast).